The following is a 209-amino-acid chain: FMN-dependent NADH:quinone oxidoreductase (209 aa).

Residues Ser-10, 16 to 18 (SHS), and 98 to 101 (MWNF) each bind FMN.

Belongs to the azoreductase type 1 family. As to quaternary structure, homodimer. The cofactor is FMN.

It catalyses the reaction 2 a quinone + NADH + H(+) = 2 a 1,4-benzosemiquinone + NAD(+). The catalysed reaction is N,N-dimethyl-1,4-phenylenediamine + anthranilate + 2 NAD(+) = 2-(4-dimethylaminophenyl)diazenylbenzoate + 2 NADH + 2 H(+). Functionally, quinone reductase that provides resistance to thiol-specific stress caused by electrophilic quinones. Also exhibits azoreductase activity. Catalyzes the reductive cleavage of the azo bond in aromatic azo compounds to the corresponding amines. This is FMN-dependent NADH:quinone oxidoreductase from Nitratidesulfovibrio vulgaris (strain ATCC 29579 / DSM 644 / CCUG 34227 / NCIMB 8303 / VKM B-1760 / Hildenborough) (Desulfovibrio vulgaris).